A 757-amino-acid polypeptide reads, in one-letter code: Serine/threonine-protein phosphatase with EF-hands 2 (757 aa).

Positions 21-46 (KAAALIQRWYRRYMARLEMRRRCTWN) constitute an IQ domain. Residues 128-544 (ATALVEAFRL…PHIVQYQANK (417 aa)) form a catalytic region. Positions 179, 181, 208, and 240 each coordinate Mn(2+). The Proton donor role is filled by H241. Position 292 (H292) interacts with Mn(2+). A disordered region spans residues 318–349 (CKTRKESENREEQKRKDNQTSSGQKPTPWFLP). Residues 321 to 335 (RKESENREEQKRKDN) show a composition bias toward basic and acidic residues. Position 492 (H492) interacts with Mn(2+). EF-hand domains follow at residues 572–607 (AHSS…VLHL), 656–691 (RNRS…FSSH), and 696–731 (ITDD…VEQS). Ca(2+) contacts are provided by D585, D587, S589, D596, D669, D671, S673, E680, D709, N711, D713, H715, and E720.

Belongs to the PPP phosphatase family. It depends on Mn(2+) as a cofactor. As to expression, detected in retina, more specifically in photoreceptors.

The enzyme catalyses O-phospho-L-seryl-[protein] + H2O = L-seryl-[protein] + phosphate. It carries out the reaction O-phospho-L-threonyl-[protein] + H2O = L-threonyl-[protein] + phosphate. With respect to regulation, activated by calcium. In terms of biological role, may play a role in phototransduction. May dephosphorylate photoactivated rhodopsin. May function as a calcium sensing regulator of ionic currents, energy production or synaptic transmission. The sequence is that of Serine/threonine-protein phosphatase with EF-hands 2 (Ppef2) from Mus musculus (Mouse).